The sequence spans 591 residues: Asparagine synthetase [glutamine-hydrolyzing] 2 (591 aa).

The active-site For GATase activity is Cys-2. The 184-residue stretch at 2 to 185 (CGILAVLGVA…PGHLYSSKTG (184 aa)) folds into the Glutamine amidotransferase type-2 domain. L-glutamine is bound by residues 50–54 (RLAIV), 75–77 (NGE), and Asp-98. Residues 193-516 (PPWFSESIPS…PKNAARLTVP (324 aa)) enclose the Asparagine synthetase domain. ATP contacts are provided by residues Leu-231, Ile-267, and 341–342 (SG).

Expressed in companion cells of leaf sheath vascular bundles, and phloem-parenchyma cells, nucellar projections and nucellar epidermis of dorsal vascular bundles of grains.

The enzyme catalyses L-aspartate + L-glutamine + ATP + H2O = L-asparagine + L-glutamate + AMP + diphosphate + H(+). The protein operates within amino-acid biosynthesis; L-asparagine biosynthesis; L-asparagine from L-aspartate (L-Gln route): step 1/1. Its function is as follows. Essential for nitrogen assimilation, distribution and remobilization within the plant via the phloem. The polypeptide is Asparagine synthetase [glutamine-hydrolyzing] 2 (Oryza sativa subsp. japonica (Rice)).